A 680-amino-acid chain; its full sequence is Probable inactive DNA (cytosine-5)-methyltransferase DRM3 (680 aa).

The tract at residues 1–24 (MVKVEDDVEGSGINASVGDLRDAA) is disordered. Positions 45–86 (SSSSHVRSQFIGMGFSPMLVDRVLQKHGDRDSDTILEALLSQ) constitute a UBA 1 domain. The interval 91–113 (KSGSESGSLGDLFDSDNEENSSH) is disordered. The region spanning 194–235 (SLFGVMDKTLHLLQMGFTEEEVSSVIDKAGPEATVLELADTI) is the UBA 2 domain. The SAM-dependent MTase DRM-type domain occupies 336 to 663 (IRRNVRSDVA…QRVKHIMGRL (328 aa)).

Belongs to the class I-like SAM-binding methyltransferase superfamily. DRM-methyltransferase family.

The protein resides in the nucleus. Involved in de novo DNA methylation. Involved in RNA-directed DNA methylation (RdDM). This Oryza sativa subsp. japonica (Rice) protein is Probable inactive DNA (cytosine-5)-methyltransferase DRM3.